A 67-amino-acid chain; its full sequence is Mitotic-spindle organizing protein 1A (67 aa).

It belongs to the MOZART1 family. As to quaternary structure, part of the gamma-tubulin complex. Interacts with GIP1 and GCP3. As to expression, mostly expressed in siliques and flowers, and, to a lower extent, in leaves, roots and seedlings, with highest levels in young tissues, meristematic cells, and the vasculature.

The protein resides in the cytoplasm. It is found in the cytoskeleton. Its subcellular location is the microtubule organizing center. The protein localises to the spindle. It localises to the nucleus. The protein resides in the phragmoplast. It is found in the nucleus envelope. Functionally, required for gamma-tubulin complex recruitment to the microtubule organizing centers (MTOCs). During mitosis, modulates gamma-tubulin complex localization, spindle stability and chromosomal segregation. Necessary for gametophyte development and embryogenesis. The sequence is that of Mitotic-spindle organizing protein 1A (GIP2) from Arabidopsis thaliana (Mouse-ear cress).